We begin with the raw amino-acid sequence, 351 residues long: Probable glucuronosyltransferase Os10g0205300 (351 aa).

The Cytoplasmic portion of the chain corresponds to 1–11 (MAAPPCPPRRP). Residues 12–32 (ISAPCFLLCFLLGFVAGLFPF) traverse the membrane as a helical; Signal-anchor for type II membrane protein segment. Over 33-351 (AHRHLHLDLH…PLKKEARPLL (319 aa)) the chain is Lumenal. The segment at 138–169 (SSPVPDAPQDRPRRRGRRQDRPAVDSRARQRN) is disordered. Positions 156 to 169 (QDRPAVDSRARQRN) are enriched in basic and acidic residues. The N-linked (GlcNAc...) asparagine glycan is linked to Asn-259.

Belongs to the glycosyltransferase 43 family.

The protein localises to the golgi apparatus membrane. Functionally, involved in the synthesis of glucuronoxylan hemicellulose in secondary cell walls. This is Probable glucuronosyltransferase Os10g0205300 from Oryza sativa subsp. japonica (Rice).